The following is a 109-amino-acid chain: Large ribosomal subunit protein uL22 (109 aa).

It belongs to the universal ribosomal protein uL22 family. Part of the 50S ribosomal subunit.

Its function is as follows. This protein binds specifically to 23S rRNA; its binding is stimulated by other ribosomal proteins, e.g. L4, L17, and L20. It is important during the early stages of 50S assembly. It makes multiple contacts with different domains of the 23S rRNA in the assembled 50S subunit and ribosome. Functionally, the globular domain of the protein is located near the polypeptide exit tunnel on the outside of the subunit, while an extended beta-hairpin is found that lines the wall of the exit tunnel in the center of the 70S ribosome. The chain is Large ribosomal subunit protein uL22 from Dechloromonas aromatica (strain RCB).